Here is a 149-residue protein sequence, read N- to C-terminus: Transcription factor bHLH153 (149 aa).

Positions 27–76 constitute a bHLH domain; it reads RHKSDLSFSSKERKDKVGERISALQQIVSPYGKTDTASVLLDAMHYIEFL.

This sequence belongs to the bHLH protein family.

The protein resides in the nucleus. The sequence is that of Transcription factor bHLH153 from Arabidopsis thaliana (Mouse-ear cress).